We begin with the raw amino-acid sequence, 30 residues long: Conotoxin TVIIA (30 aa).

3 disulfide bridges follow: Cys-2–Cys-14, Cys-9–Cys-19, and Cys-13–Cys-24. 4-hydroxyproline is present on residues Pro-10 and Pro-11.

In terms of processing, three different forms of TVIIA exist. Pro-10 and Pro-11 of conotoxin TVIIA are hydroxylated in TVIIA, whereas Pro-10 is not hydroxylated in [Pro10]TVIIA and neither Pro-10 nor Pro-11 are hydroxylated in [Pro10,11]TVIIA. Expressed by the venom duct.

The protein localises to the secreted. Its function is as follows. By structural similarity with conotoxin GS, may inhibit the sodium channel (Nav). No effect was observed upon intracranial injections into mice and intraperitoneal injections into goldfish (25 ug). In Conus tulipa (Fish-hunting cone snail), this protein is Conotoxin TVIIA.